A 549-amino-acid chain; its full sequence is Chaperonin GroEL 2 (549 aa).

Residues threonine 30–proline 33, lysine 51, aspartate 87–threonine 91, glycine 415, asparagine 479–alanine 481, and aspartate 495 contribute to the ATP site.

The protein belongs to the chaperonin (HSP60) family. Forms a cylinder of 14 subunits composed of two heptameric rings stacked back-to-back. Interacts with the co-chaperonin GroES.

It localises to the cytoplasm. It catalyses the reaction ATP + H2O + a folded polypeptide = ADP + phosphate + an unfolded polypeptide.. Together with its co-chaperonin GroES, plays an essential role in assisting protein folding. The GroEL-GroES system forms a nano-cage that allows encapsulation of the non-native substrate proteins and provides a physical environment optimized to promote and accelerate protein folding. This Polaromonas naphthalenivorans (strain CJ2) protein is Chaperonin GroEL 2.